We begin with the raw amino-acid sequence, 920 residues long: Zinc finger MIZ domain-containing protein 2 (920 aa).

Disordered stretches follow at residues 1–22 and 54–79; these read MNSM…GSFA and SQVL…VAGG. A compositionally biased stretch (low complexity) spans 60–79; the sequence is PMGPAGSPSGSSMMPGVAGG. Position 111 is an omega-N-methylarginine (R111). Disordered stretches follow at residues 243–265 and 286–391; these read GQRL…RQGV and PSTA…SPNQ. Asymmetric dimethylarginine occurs at positions 245 and 262. The span at 295 to 304 shows a compositional bias: pro residues; it reads PGQPPAPSPS. Residues 334 to 354 are compositionally biased toward polar residues; that stretch reads EQFNGQGASFNGGSVSYSQPG. Residues 366–379 are compositionally biased toward pro residues; the sequence is PSSPLPGNPTPPMT. Low complexity predominate over residues 380 to 389; that stretch reads PSSSVPYMSP. Glycyl lysine isopeptide (Lys-Gly) (interchain with G-Cter in SUMO2) cross-links involve residues K402 and K457. Residues 435–506 are interaction with AR; that stretch reads PFRLQHNLAV…TIERGDNKTS (72 aa). The SP-RING-type zinc finger occupies 585–671; the sequence is GEDGVEQTAI…IYIQNSDYEE (87 aa). Residues C616, H618, C639, and C642 each contribute to the Zn(2+) site. A Glycyl lysine isopeptide (Lys-Gly) (interchain with G-Cter in SUMO2) cross-link involves residue K692. Residues 803-920 are disordered; sequence SQMAPAGHLD…DDLLSLFENN (118 aa). Residues 876 to 890 are compositionally biased toward low complexity; it reads AGEAPEPALDLLPEL. Residues 906–920 are compositionally biased toward polar residues; the sequence is PTNNNDDLLSLFENN.

In terms of assembly, interacts with AR, SMARCA4/BRG1 and SMARCE1/BAF57. Interaction with either SMARCA4 and SMARCE1 enhances AR-mediated transcription. In terms of tissue distribution, expressed most abundantly in testis with lower levels in heart, brain, pancreas, prostate and ovary.

The protein resides in the nucleus. Functionally, increases ligand-dependent transcriptional activity of AR and other nuclear hormone receptors. The sequence is that of Zinc finger MIZ domain-containing protein 2 (ZMIZ2) from Homo sapiens (Human).